The following is a 118-amino-acid chain: Large ribosomal subunit protein bL19 (118 aa).

It belongs to the bacterial ribosomal protein bL19 family.

Its function is as follows. This protein is located at the 30S-50S ribosomal subunit interface and may play a role in the structure and function of the aminoacyl-tRNA binding site. In Wolinella succinogenes (strain ATCC 29543 / DSM 1740 / CCUG 13145 / JCM 31913 / LMG 7466 / NCTC 11488 / FDC 602W) (Vibrio succinogenes), this protein is Large ribosomal subunit protein bL19.